Reading from the N-terminus, the 122-residue chain is Large ribosomal subunit protein uL14 (122 aa).

The protein belongs to the universal ribosomal protein uL14 family. In terms of assembly, part of the 50S ribosomal subunit. Forms a cluster with proteins L3 and L19. In the 70S ribosome, L14 and L19 interact and together make contacts with the 16S rRNA in bridges B5 and B8.

Its function is as follows. Binds to 23S rRNA. Forms part of two intersubunit bridges in the 70S ribosome. This Bradyrhizobium diazoefficiens (strain JCM 10833 / BCRC 13528 / IAM 13628 / NBRC 14792 / USDA 110) protein is Large ribosomal subunit protein uL14.